We begin with the raw amino-acid sequence, 315 residues long: tRNA dimethylallyltransferase (315 aa).

14 to 21 (GPTASGKT) serves as a coordination point for ATP. Substrate is bound at residue 16–21 (TASGKT). Interaction with substrate tRNA regions lie at residues 39-42 (DSAL), 163-167 (QRIQR), and 248-253 (RCVGYR).

It belongs to the IPP transferase family. In terms of assembly, monomer. Requires Mg(2+) as cofactor.

The enzyme catalyses adenosine(37) in tRNA + dimethylallyl diphosphate = N(6)-dimethylallyladenosine(37) in tRNA + diphosphate. Catalyzes the transfer of a dimethylallyl group onto the adenine at position 37 in tRNAs that read codons beginning with uridine, leading to the formation of N6-(dimethylallyl)adenosine (i(6)A). The chain is tRNA dimethylallyltransferase from Paraburkholderia xenovorans (strain LB400).